A 471-amino-acid polypeptide reads, in one-letter code: 3-isopropylmalate dehydratase large subunit (471 aa).

Residues Cys347, Cys407, and Cys410 each contribute to the [4Fe-4S] cluster site.

It belongs to the aconitase/IPM isomerase family. LeuC type 1 subfamily. Heterodimer of LeuC and LeuD. [4Fe-4S] cluster serves as cofactor.

It carries out the reaction (2R,3S)-3-isopropylmalate = (2S)-2-isopropylmalate. The protein operates within amino-acid biosynthesis; L-leucine biosynthesis; L-leucine from 3-methyl-2-oxobutanoate: step 2/4. Functionally, catalyzes the isomerization between 2-isopropylmalate and 3-isopropylmalate, via the formation of 2-isopropylmaleate. This is 3-isopropylmalate dehydratase large subunit from Granulibacter bethesdensis (strain ATCC BAA-1260 / CGDNIH1).